Reading from the N-terminus, the 83-residue chain is Toxin TdNa5 (83 aa).

The signal sequence occupies residues Met-1–Ser-20. The region spanning Lys-21–Gly-82 is the LCN-type CS-alpha/beta domain. 4 disulfides stabilise this stretch: Cys-31–Cys-81, Cys-35–Cys-57, Cys-43–Cys-62, and Cys-47–Cys-64. The residue at position 81 (Cys-81) is a Cysteine amide.

The protein belongs to the long (4 C-C) scorpion toxin superfamily. Sodium channel inhibitor family. Beta subfamily. Expressed by the venom gland.

It localises to the secreted. In terms of biological role, inhibits the sodium currents (Nav) in an apparent irreversible manner. Produces small depolarization and induces repetitive firing in squid axons. Is specific for arthropods (crickets, triatomides, crabs and squids), but is non-toxic to mice. Shows antibacterial activity against both Gram-positive and Gram-negative bacteria. In Tityus discrepans (Venezuelan scorpion), this protein is Toxin TdNa5.